Here is a 322-residue protein sequence, read N- to C-terminus: Lipoyl synthase (322 aa).

[4Fe-4S] cluster-binding residues include cysteine 69, cysteine 74, cysteine 80, cysteine 95, cysteine 99, cysteine 102, and serine 309. In terms of domain architecture, Radical SAM core spans 81 to 298 (FNHGTATFMI…KEIALELGFT (218 aa)).

Belongs to the radical SAM superfamily. Lipoyl synthase family. The cofactor is [4Fe-4S] cluster.

Its subcellular location is the cytoplasm. The catalysed reaction is [[Fe-S] cluster scaffold protein carrying a second [4Fe-4S](2+) cluster] + N(6)-octanoyl-L-lysyl-[protein] + 2 oxidized [2Fe-2S]-[ferredoxin] + 2 S-adenosyl-L-methionine + 4 H(+) = [[Fe-S] cluster scaffold protein] + N(6)-[(R)-dihydrolipoyl]-L-lysyl-[protein] + 4 Fe(3+) + 2 hydrogen sulfide + 2 5'-deoxyadenosine + 2 L-methionine + 2 reduced [2Fe-2S]-[ferredoxin]. It functions in the pathway protein modification; protein lipoylation via endogenous pathway; protein N(6)-(lipoyl)lysine from octanoyl-[acyl-carrier-protein]: step 2/2. Its function is as follows. Catalyzes the radical-mediated insertion of two sulfur atoms into the C-6 and C-8 positions of the octanoyl moiety bound to the lipoyl domains of lipoate-dependent enzymes, thereby converting the octanoylated domains into lipoylated derivatives. The chain is Lipoyl synthase from Photobacterium profundum (strain SS9).